Here is a 361-residue protein sequence, read N- to C-terminus: Neuronal-specific septin-3 (361 aa).

Residues 1–46 form a disordered region; the sequence is MSEIVPPEVRPKPAVPAKPSHVAPPSSAPFVPSPQGTGGEGQGSGR. Residues 15–34 are compositionally biased toward low complexity; it reads VPAKPSHVAPPSSAPFVPSP. The segment covering 36–46 has biased composition (gly residues); the sequence is GTGGEGQGSGR. One can recognise a Septin-type G domain in the interval 70–342; the sequence is AGFDFNIMVV…ETYRAKRLND (273 aa). Residues 80–87 form a G1 motif region; it reads GQSGLGKS. Residues 80-87 and T114 each bind GTP; that span reads GQSGLGKS. Residues 137 to 140 form a G3 motif region; it reads DTPG. Residues 219–222 form a G4 motif region; that stretch reads AKSD. GTP is bound by residues 220–228, G276, and R291; that span reads KSDTLTPEE. A disordered region spans residues 341-361; that stretch reads NDNGGLHPISSSGHDTQESNL. Residues 349–361 show a composition bias toward polar residues; the sequence is ISSSGHDTQESNL.

This sequence belongs to the TRAFAC class TrmE-Era-EngA-EngB-Septin-like GTPase superfamily. Septin GTPase family.

It is found in the cytoplasm. Functionally, may be involved in cytokinesis. This is Neuronal-specific septin-3 from Danio rerio (Zebrafish).